A 569-amino-acid chain; its full sequence is Glutamine--tRNA ligase (569 aa).

Positions 1–23 are disordered; it reads MSKDPMSKPTPEPAAHSKAGPAV. The 'HIGH' region signature appears at 50–60; that stretch reads PEPNGYLHIGH. ATP-binding positions include 51 to 53 and 57 to 63; these read EPN and HIGHAKS. D83 and Y228 together coordinate L-glutamine. Residues T247 and 277–278 contribute to the ATP site; that span reads RL. Positions 284 to 288 match the 'KMSKS' region motif; the sequence is ITSKR.

The protein belongs to the class-I aminoacyl-tRNA synthetase family. Monomer.

The protein localises to the cytoplasm. The enzyme catalyses tRNA(Gln) + L-glutamine + ATP = L-glutaminyl-tRNA(Gln) + AMP + diphosphate. This is Glutamine--tRNA ligase from Pseudomonas syringae pv. tomato (strain ATCC BAA-871 / DC3000).